The chain runs to 418 residues: MAP kinase-interacting serine/threonine-protein kinase 1 (418 aa).

The disordered stretch occupies residues 1 to 23; sequence MVSSQPVPFDDGGKRRKKKRKTR. In terms of domain architecture, Protein kinase spans 37 to 321; that stretch reads RLTDELLGEG…AFQVLQHPWL (285 aa). ATP contacts are provided by residues 43-51 and Lys-66; that span reads LGEGAYAKV. Asp-158 serves as the catalytic Proton acceptor. Residues 384–418 form a disordered region; sequence PPSKSRLAKRRAQAHARKGGSHPTHSTVTASQGTP. Residues 389-403 show a composition bias toward basic residues; that stretch reads RLAKRRAQAHARKGG. The span at 406 to 418 shows a compositional bias: polar residues; that stretch reads PTHSTVTASQGTP.

Belongs to the protein kinase superfamily. CAMK Ser/Thr protein kinase family. The cofactor is Mg(2+).

The enzyme catalyses L-seryl-[protein] + ATP = O-phospho-L-seryl-[protein] + ADP + H(+). It carries out the reaction L-threonyl-[protein] + ATP = O-phospho-L-threonyl-[protein] + ADP + H(+). Functionally, may play a role in the response to environmental stress and cytokines. Appears to regulate translation by phosphorylating EIF4E, thus increasing the affinity of this protein for the 7-methylguanosine-containing mRNA cap. The sequence is that of MAP kinase-interacting serine/threonine-protein kinase 1 (mknk1) from Xenopus laevis (African clawed frog).